A 233-amino-acid polypeptide reads, in one-letter code: Large ribosomal subunit protein uL1 (233 aa).

The protein belongs to the universal ribosomal protein uL1 family. Part of the 50S ribosomal subunit.

In terms of biological role, binds directly to 23S rRNA. The L1 stalk is quite mobile in the ribosome, and is involved in E site tRNA release. Its function is as follows. Protein L1 is also a translational repressor protein, it controls the translation of the L11 operon by binding to its mRNA. This Photobacterium profundum (strain SS9) protein is Large ribosomal subunit protein uL1.